Here is a 154-residue protein sequence, read N- to C-terminus: Putative protein heh-1 (154 aa).

The first 15 residues, 1-15 (MKTVIFLALLGLAAA), serve as a signal peptide directing secretion. Cystine bridges form between cysteine 39–cysteine 50 and cysteine 97–cysteine 103.

The protein belongs to the NPC2 family.

The protein resides in the secreted. This chain is Putative protein heh-1 (heh-1), found in Caenorhabditis elegans.